A 651-amino-acid chain; its full sequence is Epithelial sodium channel subunit beta (651 aa).

The Cytoplasmic segment spans residues 1 to 50 (MFLKRWFIRALHRLQKGPGYGYSELFVWYCNNTNTHGPKRLIIEGPKKKT). A helical transmembrane segment spans residues 51–71 (LWSLFTVTFACLVFWQWGLLI). Over 72–541 (QTYLSWGVSV…GGQFGFWMGG (470 aa)) the chain is Extracellular. Cystine bridges form between cysteine 98-cysteine 281, cysteine 205-cysteine 212, cysteine 258-cysteine 265, cysteine 370-cysteine 457, cysteine 395-cysteine 453, cysteine 399-cysteine 449, cysteine 408-cysteine 435, and cysteine 410-cysteine 424. A helical membrane pass occupies residues 542 to 562 (SVLCIIEFGEVFIDCIWIAVI). Over 563–651 (RFVKWYKNRK…TEHHSDSEDL (89 aa)) the chain is Cytoplasmic. Residues 612–651 (QPPDLYLPTTLEIPGTPPPKYDSLRVHPIDTEHHSDSEDL) form a disordered region. Residues 633–651 (DSLRVHPIDTEHHSDSEDL) show a composition bias toward basic and acidic residues.

Belongs to the amiloride-sensitive sodium channel (TC 1.A.6) family. SCNN1B subfamily. In terms of assembly, component of the heterotrimeric epithelial sodium channel (ENaC) composed of an alpha/SCNN1A, a beta/SCNN1B and a gamma/SCNN1G subunit. In terms of tissue distribution, strongly expressed in gill, kidney and rectum and more weakly in brain, eye, liver and muscle.

The protein resides in the apical cell membrane. Its subcellular location is the cytoplasmic vesicle membrane. The enzyme catalyses Na(+)(in) = Na(+)(out). Its activity is regulated as follows. Originally identified and characterized by its inhibition by the diuretic drug amiloride. This is one of the three pore-forming subunits of the heterotrimeric epithelial sodium channel (ENaC), a critical regulator of sodium balance and fluid homeostasis. ENaC operates in epithelial tissues, where it mediates the electrodiffusion of sodium ions from extracellular fluid through the apical membrane of cells, with water following osmotically. This is Epithelial sodium channel subunit beta from Neoceratodus forsteri (Australian lungfish).